A 350-amino-acid polypeptide reads, in one-letter code: MAVLVVLLFFLVAGALGNEFSILRSPGSVVFRNGNWPIPGDRIPDVAALSMGFSVKEDLSWPGLAVGNLFHRPRATIMVMVKGVDKLALPAGSVISYPLENAVPFSLDSVANSIHSLFSEETPVVLQLAPSEERVYMVGKANSVFEDLSVTLRQLRNRLFQENSLLNSLPLNSLSRNNEVDLLFLSELQVLHDISSLLSRHKHLAKDHSPDLYSLELAGLDELGKRYGEDSEQFRDASKILVDALQKFADDMYSLYGGNAVVELVTVKSFDTSLVRKSRTILEAKQENTQSPYNLAYKYNLEYSVVFNLVLWIMIGLALAVIITSYNIWNMDPGYDSIIYRMTNQKIRID.

The signal sequence occupies residues 1 to 17 (MAVLVVLLFFLVAGALG). The Extracellular portion of the chain corresponds to 18–302 (NEFSILRSPG…YNLAYKYNLE (285 aa)). Residues 303-323 (YSVVFNLVLWIMIGLALAVII) traverse the membrane as a helical segment. Residues 324 to 350 (TSYNIWNMDPGYDSIIYRMTNQKIRID) are Cytoplasmic-facing. Positions 346 to 350 (KIRID) match the Mediates retrograde transport to the ER motif.

Interacts with renin. Accessory component of the multisubunit proton-transporting vacuolar (V)-ATPase protein pump. Interacts (via N-terminus) with ATP6AP1 (via N-terminus). Interacts with ATP6V0D1; ATP6V0D1 is a V-ATPase complex subunit and the interaction promotes V-ATPase complex assembly. Interacts with TMEM9; TMEM9 is a V-ATPase assembly regulator and the interaction induces the interaction with ATP6V0D1. Interacts with VMA21 (via N-terminus); VMA21 is a V-ATPase accessory component. Phosphorylated. Post-translationally, proteolytically cleaved by a furin-like convertase in the trans-Golgi network to generate N- and C-terminal fragments. In terms of tissue distribution, expressed in glutamatergic and GABAergic neurons with highest levels in the cortex, the hippocampus, the medial habenular nucleus, the cerebellum, the medulla and the olfactory bulb (at protein level).

Its subcellular location is the endoplasmic reticulum membrane. The protein resides in the lysosome membrane. It is found in the cytoplasmic vesicle. The protein localises to the autophagosome membrane. It localises to the cell projection. Its subcellular location is the dendritic spine membrane. The protein resides in the axon. It is found in the endosome membrane. The protein localises to the clathrin-coated vesicle membrane. It localises to the secretory vesicle. Its subcellular location is the synaptic vesicle membrane. Its function is as follows. Multifunctional protein which functions as a renin, prorenin cellular receptor and is involved in the assembly of the lysosomal proton-transporting V-type ATPase (V-ATPase) and the acidification of the endo-lysosomal system. May mediate renin-dependent cellular responses by activating ERK1 and ERK2. By increasing the catalytic efficiency of renin in AGT/angiotensinogen conversion to angiotensin I, may also play a role in the renin-angiotensin system (RAS). Through its function in V-type ATPase (v-ATPase) assembly and acidification of the lysosome it regulates protein degradation and may control different signaling pathways important for proper brain development, synapse morphology and synaptic transmission. This Mus musculus (Mouse) protein is Renin receptor.